The chain runs to 518 residues: Protein nucleotidyltransferase YdiU (518 aa).

The span at 1–10 (MTHLRFDNRL) shows a compositional bias: basic and acidic residues. A disordered region spans residues 1 to 23 (MTHLRFDNRLRQQLPGDPEEGSR). ATP-binding residues include Gly100, Gly102, Arg103, Lys123, Asp135, Gly136, Arg193, and Arg200. Asp270 acts as the Proton acceptor in catalysis. Residues Asn271 and Asp280 each contribute to the Mg(2+) site. Asp280 contributes to the ATP binding site.

It belongs to the SELO family. It depends on Mg(2+) as a cofactor. Requires Mn(2+) as cofactor.

The enzyme catalyses L-seryl-[protein] + ATP = 3-O-(5'-adenylyl)-L-seryl-[protein] + diphosphate. It catalyses the reaction L-threonyl-[protein] + ATP = 3-O-(5'-adenylyl)-L-threonyl-[protein] + diphosphate. It carries out the reaction L-tyrosyl-[protein] + ATP = O-(5'-adenylyl)-L-tyrosyl-[protein] + diphosphate. The catalysed reaction is L-histidyl-[protein] + UTP = N(tele)-(5'-uridylyl)-L-histidyl-[protein] + diphosphate. The enzyme catalyses L-seryl-[protein] + UTP = O-(5'-uridylyl)-L-seryl-[protein] + diphosphate. It catalyses the reaction L-tyrosyl-[protein] + UTP = O-(5'-uridylyl)-L-tyrosyl-[protein] + diphosphate. Nucleotidyltransferase involved in the post-translational modification of proteins. It can catalyze the addition of adenosine monophosphate (AMP) or uridine monophosphate (UMP) to a protein, resulting in modifications known as AMPylation and UMPylation. This is Protein nucleotidyltransferase YdiU from Xanthomonas axonopodis pv. citri (strain 306).